Consider the following 224-residue polypeptide: Adenylate kinase (224 aa).

10-15 (GSGKGT) lines the ATP pocket. Positions 30–59 (ESGAIFRDNIKGGTDLGMKAKAYIDKGDLV) are NMP. AMP contacts are provided by residues serine 31, arginine 36, 57–59 (DLV), 85–88 (GFPR), and glutamine 92. Residues 126–165 (GRRLCENDNNHPNNIFIDAIKPNGDKCRVCGGALSSRADD) are LID. Position 127 (arginine 127) interacts with ATP. AMP contacts are provided by arginine 162 and arginine 174. Asparagine 211 serves as a coordination point for ATP.

It belongs to the adenylate kinase family. In terms of assembly, monomer.

The protein resides in the cytoplasm. The enzyme catalyses AMP + ATP = 2 ADP. Its pathway is purine metabolism; AMP biosynthesis via salvage pathway; AMP from ADP: step 1/1. Catalyzes the reversible transfer of the terminal phosphate group between ATP and AMP. Plays an important role in cellular energy homeostasis and in adenine nucleotide metabolism. The chain is Adenylate kinase from Desulforapulum autotrophicum (strain ATCC 43914 / DSM 3382 / VKM B-1955 / HRM2) (Desulfobacterium autotrophicum).